Reading from the N-terminus, the 557-residue chain is Nucleoporin AMO1 (557 aa).

The segment at Met-1–Lys-25 adopts a C3H1-type zinc-finger fold. Positions Gln-114 to Ala-141 form a coiled coil. The disordered stretch occupies residues Glu-161–Phe-297. SXFG repeat units follow at residues Ser-171–Gly-174, Ser-200–Gly-203, Ser-213–Gly-216, Ser-228–Gly-231, Ser-240–Gly-243, Ser-249–Gly-252, Ser-262–Gly-265, Ser-282–Gly-285, Ser-303–Gly-306, and Ser-314–Gly-317. Positions Ser-195–Phe-215 are enriched in polar residues. The segment covering Gly-243–Gln-253 has biased composition (polar residues). Residues Pro-315–Pro-463 are disordered. Polar residues-rich tracts occupy residues Gln-321–Asn-338 and Gly-351–Ser-366. 4 SXFG repeats span residues Ser-348 to Gly-351, Ser-370 to Gly-373, Ser-387 to Gly-390, and Ser-407 to Gly-410. Residues Thr-367–Ser-385 show a composition bias toward low complexity. Positions Leu-388–Gly-429 are enriched in polar residues. The segment covering Ala-430–Pro-443 has biased composition (low complexity).

In terms of assembly, the nuclear pore complex (NPC) constitutes the exclusive means of nucleocytoplasmic transport. NPCs allow the passive diffusion of ions and small molecules and the active, nuclear transport receptor-mediated bidirectional transport of macromolecules such as proteins, RNAs, ribonucleoparticles (RNPs), and ribosomal subunits across the nuclear envelope. The 55-60 MDa NPC is composed of at least 28 different subunits: AMO1, ELYS, GLE1, GLE2, MLP1, NDC1, NIC96, NSP1, NUP133, NUP145, NUP152, NUP159, NUP170, NUP188, NUP192, NUP37, NUP49, NUP53, NUP56, NUP57, NUP82, NUP84, NUP85, POM152, POM33, POM34, SEC13 and SEH1. Due to its 8-fold rotational symmetry, all subunits are present with 8 copies or multiples thereof.

The protein resides in the nucleus. Its subcellular location is the nuclear pore complex. It localises to the nucleus membrane. In terms of biological role, functions as a component of the nuclear pore complex (NPC). NPC components, collectively referred to as nucleoporins (NUPs), can play the role of both NPC structural components and of docking or interaction partners for transiently associated nuclear transport factors. Active directional transport is assured by both, a Phe-Gly (FG) repeat affinity gradient for these transport factors across the NPC and a transport cofactor concentration gradient across the nuclear envelope (GSP1 and GSP2 GTPases associated predominantly with GTP in the nucleus, with GDP in the cytoplasm). AMO1 is specifically important for nuclear protein and mRNA export. This Chaetomium thermophilum (strain DSM 1495 / CBS 144.50 / IMI 039719) (Thermochaetoides thermophila) protein is Nucleoporin AMO1 (AMO1).